The chain runs to 244 residues: Small ribosomal subunit protein uS2 (244 aa).

Belongs to the universal ribosomal protein uS2 family.

This chain is Small ribosomal subunit protein uS2, found in Buchnera aphidicola subsp. Acyrthosiphon pisum (strain 5A).